Here is a 312-residue protein sequence, read N- to C-terminus: 6-hydroxy-3-succinoylpyridine 3-monooxygenase HspA (312 aa).

One can recognise an NYN domain in the interval 14 to 210 (IYIDGYNFYY…RSANTDLIKF (197 aa)).

It catalyses the reaction 4-(6-hydroxypyridin-3-yl)-4-oxobutanoate + 2 NADH + O2 + 2 H(+) = 2,5-dihydroxypyridine + succinate semialdehyde + 2 NAD(+) + H2O. It participates in alkaloid degradation; nicotine degradation. Functionally, involved in the nicotine degradation. Catalyzes the cleavage of 6-hydroxy-3-succinoylpyridine (HSP) by incorporation of oxygen at the 3-position to produce to 2,5-dihydroxypyridine (DHP) and succinic semialdehyde. This is 6-hydroxy-3-succinoylpyridine 3-monooxygenase HspA from Pseudomonas putida (strain DSM 28022 / S16).